Here is a 461-residue protein sequence, read N- to C-terminus: E3 ubiquitin-protein ligase TRIM15 (461 aa).

Residues 12-57 form an RING-type zinc finger; sequence CSDCQGRLEDAVTAACGHTFCRLCLPLPPQMGAQPSSRVLLCPVCQ. Residues 74-115 form a B box-type zinc finger; the sequence is LGETYCEEHGEKIYFFCENDAEFLCVFCREGPSHQAHAVGFL. Zn(2+) contacts are provided by Cys-79, His-82, Cys-101, and His-107. Positions 123-230 form a coiled coil; that stretch reads RDRLRGRLEA…EKCQQPASEL (108 aa). Residues 272 to 461 form the B30.2/SPRY domain; the sequence is EMLRAFSENL…KKGSCLTLKG (190 aa).

Belongs to the TRIM/RBCC family. In terms of assembly, interacts with paxillin/PXN; this interaction recruits TRIM15 to focal adhesions. Interacts with TRIM8; this interaction prevents TRIM8 cytoplasmic translocation.

It is found in the cytoplasm. Its subcellular location is the nucleus. The protein resides in the cell junction. The protein localises to the focal adhesion. It catalyses the reaction S-ubiquitinyl-[E2 ubiquitin-conjugating enzyme]-L-cysteine + [acceptor protein]-L-lysine = [E2 ubiquitin-conjugating enzyme]-L-cysteine + N(6)-ubiquitinyl-[acceptor protein]-L-lysine.. E3 ubiquitin ligase that plays a role in several processes including innate antiviral immnity, cell migration and chemotaxis. Acts as a 'Lys-63'-specific ubiquitin ligase for MAPK1/ERK2 and MAPK3/ERK1, promoting their activation by facilitating their interaction with MAP2K1 and MAP2K2. Also plays a role in cell migration and chemotaxis by acting as a stable focal adhesion component upon recruitment by multi-adapter protein paxillin/PXN. Functions in the RIGI-mediated interferon induction pathway upstream or at the level of MAVS. Inhibits NF-kappa-B activation by turnover of 'Lys-63'-linked ubiquitination of MAP3K7/TAK1. Mechanistically, prevents TRIM8 cytoplasmic translocation and thus inhibits TRIM8-mediated 'Lys-63'-linked polyubiquitination of MAP3K7/TAK1 in the cytoplasm. Also has an important regulatory effect on the activation of hepatic stellate cells (HSCs). The chain is E3 ubiquitin-protein ligase TRIM15 (TRIM15) from Sus scrofa (Pig).